A 184-amino-acid polypeptide reads, in one-letter code: Photosystem I assembly protein Ycf4 (184 aa).

2 consecutive transmembrane segments (helical) span residues 22–42 and 57–77; these read FFWA…GTSS and ILFF…LFIS.

Belongs to the Ycf4 family.

It is found in the plastid. The protein localises to the chloroplast thylakoid membrane. Its function is as follows. Seems to be required for the assembly of the photosystem I complex. This Nandina domestica (Heavenly bamboo) protein is Photosystem I assembly protein Ycf4.